The sequence spans 211 residues: Porin MspA (211 aa).

The N-terminal stretch at 1-27 is a signal peptide; the sequence is MKAISRVLIAMVAAIAALFTSTGTSHA.

This sequence belongs to the mycobacterial porin (TC 1.B.24) family. In terms of assembly, forms very stable octamers. Isolated as a 100 kDa complex that can be reduced to monomers upon boiling in 80% dimethyl sulfoxide for 15 minutes. Structures show a goblet with the wide end on the exterior of the outer membrane and a central channel. It is not known if mixed oligomers of MspA with other Msp subunits form in vivo.

The protein localises to the cell outer membrane. The protein resides in the secreted. It localises to the cell wall. The major porin in this organism, forms a water-filled channel which favors the permeation of cations, amino acids, iron Fe(3+) and less efficiently phosphate. Does not transport Fe-ExoMS, the predominant siderophore. Plays a role in transport of beta-lactamase and hydrophilic fluoroquinolone antibiotics such as norfloxacin as well as chloramphenicol. There are about 2400 porins in wild-type, 800 in an mspA deletion and 150 in a double mspA-mspC deletion. Different conductance values with maxima at 2.3 and 4.6 nanosiemens might be caused by a simultaneous reconstitution of MspA channels into the membrane or by the existence of different MspA conformations. This is Porin MspA (mspA) from Mycolicibacterium smegmatis (strain ATCC 700084 / mc(2)155) (Mycobacterium smegmatis).